The sequence spans 229 residues: Cytochrome c oxidase assembly factor 7 (229 aa).

Sel1-like repeat units follow at residues Pro-34 to Ala-66, Ala-68 to Gly-104, Val-108 to Phe-145, Ala-146 to His-182, and Val-183 to Gly-218. Residues Asp-197–Glu-229 are disordered.

This sequence belongs to the hcp beta-lactamase family.

Its subcellular location is the mitochondrion intermembrane space. In terms of biological role, may be required for assembly of mitochondrial respiratory chain complexes. This is Cytochrome c oxidase assembly factor 7 (coa7) from Danio rerio (Zebrafish).